The following is a 348-amino-acid chain: Probable dual-specificity RNA methyltransferase RlmN (348 aa).

E93 (proton acceptor) is an active-site residue. The Radical SAM core domain maps to 99–333 (TEKRLTACLS…VSLRKSRGLD (235 aa)). A disulfide bond links C106 and C338. Positions 113, 117, and 120 each coordinate [4Fe-4S] cluster. S-adenosyl-L-methionine contacts are provided by residues 160-161 (GE), S190, 219-221 (SLH), and N295. C338 serves as the catalytic S-methylcysteine intermediate.

Belongs to the radical SAM superfamily. RlmN family. It depends on [4Fe-4S] cluster as a cofactor.

The protein resides in the cytoplasm. It carries out the reaction adenosine(2503) in 23S rRNA + 2 reduced [2Fe-2S]-[ferredoxin] + 2 S-adenosyl-L-methionine = 2-methyladenosine(2503) in 23S rRNA + 5'-deoxyadenosine + L-methionine + 2 oxidized [2Fe-2S]-[ferredoxin] + S-adenosyl-L-homocysteine. The catalysed reaction is adenosine(37) in tRNA + 2 reduced [2Fe-2S]-[ferredoxin] + 2 S-adenosyl-L-methionine = 2-methyladenosine(37) in tRNA + 5'-deoxyadenosine + L-methionine + 2 oxidized [2Fe-2S]-[ferredoxin] + S-adenosyl-L-homocysteine. In terms of biological role, specifically methylates position 2 of adenine 2503 in 23S rRNA and position 2 of adenine 37 in tRNAs. The sequence is that of Probable dual-specificity RNA methyltransferase RlmN from Prochlorococcus marinus (strain MIT 9215).